Reading from the N-terminus, the 468-residue chain is MDPLGDTLRRLREAFHAGRTRPAEFRAAQLQGLGRFLQENKQLLHDALAQDLHKSAFESEVSEVAISQGEVTLALRNLRAWMKDERVPKNLATQLDSAFIRKEPFGLVLIIAPWNYPLNLTLVPLVGALAAGNCVVLKPSEISKNVEKILAEVLPQYVDQSCFAVVLGGPQETGQLLEHRFDYIFFTGSPRVGKIVMTAAAKHLTPVTLELGGKNPCYVDDNCDPQTVANRVAWFRYFNAGQTCVAPDYVLCSPEMQERLLPALQSTITRFYGDDPQSSPNLGRIINQKQFQRLRALLGCGRVAIGGQSDESDRYIAPTVLVDVQEMEPVMQEEIFGPILPIVNVQSLDEAIEFINRREKPLALYAFSNSSQVVKRVLTQTSSGGFCGNDGFMHMTLASLPFGGVGASGMGRYHGKFSFDTFSHHRACLLRSPGMEKLNALRYPPQSPRRLRMLLVAMEAQGCSCTLL.

Met1 bears the N-acetylmethionine mark. 188–193 (GSPRVG) contacts NAD(+). Catalysis depends on residues Glu210 and Cys244. A lipid anchor (S-palmitoyl cysteine) is attached at Cys463. The residue at position 465 (Cys465) is a Cysteine methyl ester. Residue Cys465 is the site of S-geranylgeranyl cysteine attachment. A propeptide spans 466 to 468 (TLL) (removed in mature form).

Belongs to the aldehyde dehydrogenase family. Post-translationally, dually lipidated in the C-terminus; prenylation occurs prior to, and is a prerequisite for palmitoylation. It is also required for activity towards long-chain substrates. Highest expression in kidney and lung.

The protein resides in the cell membrane. It carries out the reaction an aldehyde + NADP(+) + H2O = a carboxylate + NADPH + 2 H(+). It catalyses the reaction an aldehyde + NAD(+) + H2O = a carboxylate + NADH + 2 H(+). The catalysed reaction is a long-chain fatty aldehyde + NAD(+) + H2O = a long-chain fatty acid + NADH + 2 H(+). The enzyme catalyses a medium-chain fatty aldehyde + NAD(+) + H2O = a medium-chain fatty acid + NADH + 2 H(+). It carries out the reaction octanal + NAD(+) + H2O = octanoate + NADH + 2 H(+). It catalyses the reaction nonanal + NAD(+) + H2O = nonanoate + NADH + 2 H(+). The catalysed reaction is hexadecanoate + NADH + 2 H(+) = hexadecanal + NAD(+) + H2O. The enzyme catalyses (2E)-octenal + NAD(+) + H2O = (2E)-octenoate + NADH + 2 H(+). It carries out the reaction (E)-non-2-enal + NAD(+) + H2O = (E)-non-2-enoate + NADH + 2 H(+). It catalyses the reaction (E)-4-hydroxynon-2-enal + NAD(+) + H2O = (E)-4-hydroxynon-2-enoate + NADH + 2 H(+). The catalysed reaction is (2E)-hexadecenal + NAD(+) + H2O = (E)-hexadec-2-enoate + NADH + 2 H(+). The enzyme catalyses benzaldehyde + NAD(+) + H2O = benzoate + NADH + 2 H(+). It carries out the reaction a medium-chain fatty aldehyde + NADP(+) + H2O = a medium-chain fatty acid + NADPH + 2 H(+). It catalyses the reaction hexanal + NADP(+) + H2O = hexanoate + NADPH + 2 H(+). The catalysed reaction is octanal + NADP(+) + H2O = octanoate + NADPH + 2 H(+). The enzyme catalyses nonanal + NADP(+) + H2O = nonanoate + NADPH + 2 H(+). It carries out the reaction (2E)-octenal + NADP(+) + H2O = (2E)-octenoate + NADPH + 2 H(+). It catalyses the reaction (E)-non-2-enal + NADP(+) + H2O = (E)-non-2-enoate + NADPH + 2 H(+). The catalysed reaction is (E)-4-hydroxynon-2-enal + NADP(+) + H2O = (E)-4-hydroxynon-2-enoate + NADPH + 2 H(+). The enzyme catalyses benzaldehyde + NADP(+) + H2O = benzoate + NADPH + 2 H(+). The protein operates within alcohol metabolism; ethanol degradation; acetate from ethanol: step 2/2. Functionally, oxidizes medium and long chain saturated and unsaturated fatty aldehydes generated in the plasma membrane into non-toxic fatty acids. May have a protective role against the cytotoxicity induced by lipid peroxidation. Short-chain fatty aldehydes are not good substrates. Can use both NADP(+) and NAD(+) as electron acceptor in vitro, however in vivo preference will depend on their tissue levels. Low activity towards acetaldehyde and 3,4-dihydroxyphenylacetaldehyde. Able to metabolize aromatic aldehydes such as benzaldehyde to their acid form. This chain is Aldehyde dehydrogenase family 3 member B1 (ALDH3B1), found in Homo sapiens (Human).